The sequence spans 431 residues: Glucose-1-phosphate adenylyltransferase (431 aa).

Beta-D-fructose 1,6-bisphosphate is bound at residue K39. Residues R40, H46, and R52 each contribute to the AMP site. Y114 lines the alpha-D-glucose 1-phosphate pocket. R130 contacts AMP. Alpha-D-glucose 1-phosphate-binding positions include G179, 194 to 195, and S212; that span reads EK. Residues E370 and R386 each contribute to the AMP site. Beta-D-fructose 1,6-bisphosphate-binding positions include 419 to 423 and 429 to 431; these read REMLR and QER.

This sequence belongs to the bacterial/plant glucose-1-phosphate adenylyltransferase family. Homotetramer.

The catalysed reaction is alpha-D-glucose 1-phosphate + ATP + H(+) = ADP-alpha-D-glucose + diphosphate. It functions in the pathway glycan biosynthesis; glycogen biosynthesis. Its activity is regulated as follows. Allosterically activated by fructose-1,6-bisphosphate (F16BP) and inhibited by AMP. Its function is as follows. Involved in the biosynthesis of ADP-glucose, a building block required for the elongation reactions to produce glycogen. Catalyzes the reaction between ATP and alpha-D-glucose 1-phosphate (G1P) to produce pyrophosphate and ADP-Glc. The sequence is that of Glucose-1-phosphate adenylyltransferase from Escherichia fergusonii (strain ATCC 35469 / DSM 13698 / CCUG 18766 / IAM 14443 / JCM 21226 / LMG 7866 / NBRC 102419 / NCTC 12128 / CDC 0568-73).